The primary structure comprises 155 residues: MAVFTFEDQTTSPVAPATLYKALVKDADTIVPKAVDSFKSVEIVEGNGGPGTIKKISFVEDGETKFVLHKIEEIDEANLGYSYSIVGGAALPDTAEKISIDSKLSDGPNGGSVVKLSIKYHSKGDAPPNEDELKAGKAKSDALFKVIEAYLLANP.

This sequence belongs to the BetVI family.

The polypeptide is Pathogenesis-related protein 2 (Phaseolus vulgaris (Kidney bean)).